The primary structure comprises 359 residues: uncharacterized protein (359 aa).

Residues 73–88 (AATAGTTPATGASGSA) are compositionally biased toward low complexity. The interval 73-93 (AATAGTTPATGASGSARPTDA) is disordered. The region spanning 179 to 354 (PSTCRGDNVS…AFSAAIQAGE (176 aa)) is the Macro domain.

This is an uncharacterized protein from Mycobacterium tuberculosis (strain ATCC 25618 / H37Rv).